A 321-amino-acid polypeptide reads, in one-letter code: Acyl-CoA 5-desaturase AL21 (321 aa).

The next 2 helical transmembrane spans lie at 42 to 62 (IFHI…PFTF) and 64 to 84 (WSAF…GTTL). Fe cation-binding residues include H87, H92, H124, H127, and H128. The short motif at 87–92 (HRNLTH) is the Histidine box-1 element. The short motif at 124 to 128 (HRYHH) is the Histidine box-2 element. The chain crosses the membrane as a helical span at residues 190 to 210 (LQAALLYMFGGFPFIVWGMAV). 4 residues coordinate Fe cation: H227, H256, H259, and H260. The Histidine box-3 signature appears at 256–260 (HNNHH).

This sequence belongs to the fatty acid desaturase type 1 family. It depends on Fe(2+) as a cofactor.

The protein resides in the membrane. It catalyses the reaction (11Z,14Z)-eicosadienoyl-CoA + AH2 + O2 = (5Z,11Z,14Z)-eicosatrienoyl-CoA + A + 2 H2O. The catalysed reaction is (11Z,14Z,17Z)-eicosatrienoyl-CoA + AH2 + O2 = (5Z,11Z,14Z,17Z)-eicosatetraenoyl-CoA + A + 2 H2O. It functions in the pathway lipid metabolism; polyunsaturated fatty acid biosynthesis. Its function is as follows. Catalyzes the desaturation of 20:2Delta(11,14) and 20:3Delta(11,14,17) to generate sciadonic acid (20:3Delta(5,11,14)) and juniperonic acid (20:4Delta(5,11,14,17)). The enzyme can also use 16:0 and 18:0 as substrates. This is Acyl-CoA 5-desaturase AL21 from Anemone leveillei (Windflower).